We begin with the raw amino-acid sequence, 513 residues long: MGIGTLLLFTFLGLVAGATAVWLITRTLLKQRTEGILAEARREAEVIKQKKLLEVKEKFLQLKGDLEKQVAQRNSKLQSVESKLKSREQTLNQRQEDITKKGQEMDLMRENLTAQLSVIEKKKTELDELKTREQAHLESLSGLSAAEAKDRLVESLKDEAKGQASAYVNEIIEEAKMTANKEAKRIVIQSIQRVATETAIENSVTVFHIESDEIKGRIIGREGRNIRALEAAAGIEIIVDDTPEAIVLSGFDPVRREIARLALHQLVQDGRIHPARIEEVVSKVRKQVEEEIIETGKRTVIDLGIHGLHPELIRLIGKMKYRSSYGQNLLQHSRETANLCAIMASELGLNPKKAKRAGLLHDIGKVPDDEPELPHALLGMKLCEKFKEKPDICNAVGAHHDEVEMMSLIAPIVQVCDAISGARPGARREIVEAYIKRLNDLEQLAMSYPGVIKTYAIQAGRELRVIVGADKTDDASVETLSNEIAKRIQDEMTYPGQVKITVIRESRSVSYAK.

The chain crosses the membrane as a helical span at residues 3 to 23 (IGTLLLFTFLGLVAGATAVWL). Residues 77 to 96 (LQSVESKLKSREQTLNQRQE) are disordered. Over residues 82–96 (SKLKSREQTLNQRQE) the composition is skewed to basic and acidic residues. A KH domain is found at 203-263 (SVTVFHIESD…VRREIARLAL (61 aa)). The HD domain occupies 329–422 (LLQHSRETAN…VQVCDAISGA (94 aa)).

Belongs to the RNase Y family.

It is found in the cell membrane. Functionally, endoribonuclease that initiates mRNA decay. This Porphyromonas gingivalis (strain ATCC BAA-308 / W83) protein is Ribonuclease Y.